The chain runs to 89 residues: Conotoxin Bu5 (89 aa).

The first 22 residues, 1 to 22, serve as a signal peptide directing secretion; sequence MKLTCVLIVAVLFLTACQLATA. Residues 23-49 constitute a propeptide that is removed on maturation; that stretch reads ENSREEQGYSAVRSSDQIQDSDLKLTK. 3 cysteine pairs are disulfide-bonded: Cys51/Cys66, Cys58/Cys70, and Cys65/Cys79. Residue Cys79 is modified to Cysteine amide. Positions 80-89 are excised as a propeptide; that stretch reads GVSIDYYDSR.

It belongs to the conotoxin O1 superfamily. Expressed by the venom duct.

Its subcellular location is the secreted. This Conus bullatus (Bubble cone) protein is Conotoxin Bu5.